Consider the following 201-residue polypeptide: FMN-dependent NADH:quinone oxidoreductase (201 aa).

FMN is bound by residues serine 10, 16 to 18, 96 to 99, and 140 to 143; these read SQS, MYNF, and SRGG.

Belongs to the azoreductase type 1 family. Homodimer. Requires FMN as cofactor.

It carries out the reaction 2 a quinone + NADH + H(+) = 2 a 1,4-benzosemiquinone + NAD(+). The catalysed reaction is N,N-dimethyl-1,4-phenylenediamine + anthranilate + 2 NAD(+) = 2-(4-dimethylaminophenyl)diazenylbenzoate + 2 NADH + 2 H(+). Functionally, quinone reductase that provides resistance to thiol-specific stress caused by electrophilic quinones. Its function is as follows. Also exhibits azoreductase activity. Catalyzes the reductive cleavage of the azo bond in aromatic azo compounds to the corresponding amines. The protein is FMN-dependent NADH:quinone oxidoreductase of Yersinia pseudotuberculosis serotype O:1b (strain IP 31758).